The following is a 425-amino-acid chain: Serine--tRNA ligase (425 aa).

L-serine is bound at residue Thr231–Glu233. Arg262–Glu264 contributes to the ATP binding site. An L-serine-binding site is contributed by Glu285. Glu349–Ser352 provides a ligand contact to ATP. Ser385 serves as a coordination point for L-serine.

It belongs to the class-II aminoacyl-tRNA synthetase family. Type-1 seryl-tRNA synthetase subfamily. As to quaternary structure, homodimer. The tRNA molecule binds across the dimer.

Its subcellular location is the cytoplasm. It catalyses the reaction tRNA(Ser) + L-serine + ATP = L-seryl-tRNA(Ser) + AMP + diphosphate + H(+). It carries out the reaction tRNA(Sec) + L-serine + ATP = L-seryl-tRNA(Sec) + AMP + diphosphate + H(+). Its pathway is aminoacyl-tRNA biosynthesis; selenocysteinyl-tRNA(Sec) biosynthesis; L-seryl-tRNA(Sec) from L-serine and tRNA(Sec): step 1/1. Catalyzes the attachment of serine to tRNA(Ser). Is also able to aminoacylate tRNA(Sec) with serine, to form the misacylated tRNA L-seryl-tRNA(Sec), which will be further converted into selenocysteinyl-tRNA(Sec). This Maricaulis maris (strain MCS10) (Caulobacter maris) protein is Serine--tRNA ligase.